Here is a 248-residue protein sequence, read N- to C-terminus: ATP synthase subunit a, chloroplastic (248 aa).

5 helical membrane-spanning segments follow: residues 38–58 (QVLLTSWVVIAVLLGSATIAV), 96–116 (VPFIGTMFLFIFVSNWSGALL), 135–155 (INTTVALALLTSVAYFYAGLT), 200–220 (LVVAVLVSLVPLIVPIPVMFL), and 221–241 (GLFTSGIQALIFATLAAAYIG).

This sequence belongs to the ATPase A chain family. In terms of assembly, F-type ATPases have 2 components, CF(1) - the catalytic core - and CF(0) - the membrane proton channel. CF(1) has five subunits: alpha(3), beta(3), gamma(1), delta(1), epsilon(1). CF(0) has four main subunits: a, b, b' and c.

Its subcellular location is the plastid. The protein resides in the chloroplast thylakoid membrane. Its function is as follows. Key component of the proton channel; it plays a direct role in the translocation of protons across the membrane. In Pinus thunbergii (Japanese black pine), this protein is ATP synthase subunit a, chloroplastic.